The sequence spans 170 residues: Ureidoglycolate lyase (170 aa).

Belongs to the ureidoglycolate lyase family. Homodimer. Ni(2+) is required as a cofactor.

It catalyses the reaction (S)-ureidoglycolate = urea + glyoxylate. Its pathway is nitrogen metabolism; (S)-allantoin degradation. Catalyzes the catabolism of the allantoin degradation intermediate (S)-ureidoglycolate, generating urea and glyoxylate. Involved in the utilization of allantoin as nitrogen source. The sequence is that of Ureidoglycolate lyase from Burkholderia mallei (strain NCTC 10247).